The following is a 181-amino-acid chain: Oligoribonuclease (181 aa).

An Exonuclease domain is found at 8–171 (LIWIDLEMTG…QDIQESIAEL (164 aa)). The active site involves tyrosine 129.

The protein belongs to the oligoribonuclease family.

The protein localises to the cytoplasm. 3'-to-5' exoribonuclease specific for small oligoribonucleotides. This chain is Oligoribonuclease, found in Shewanella baltica (strain OS155 / ATCC BAA-1091).